We begin with the raw amino-acid sequence, 442 residues long: Ribosomal protein uS12 methylthiotransferase RimO (442 aa).

In terms of domain architecture, MTTase N-terminal spans 8–118 (PKVGFVSLGC…VLGHVHKYVE (111 aa)). 6 residues coordinate [4Fe-4S] cluster: cysteine 17, cysteine 53, cysteine 82, cysteine 150, cysteine 154, and cysteine 157. The Radical SAM core domain maps to 136–373 (LTPRHYAYLK…MELQQQVSIR (238 aa)). In terms of domain architecture, TRAM spans 376–442 (ARKVGKEMLV…EYDLWASLID (67 aa)).

This sequence belongs to the methylthiotransferase family. RimO subfamily. [4Fe-4S] cluster is required as a cofactor.

Its subcellular location is the cytoplasm. The enzyme catalyses L-aspartate(89)-[ribosomal protein uS12]-hydrogen + (sulfur carrier)-SH + AH2 + 2 S-adenosyl-L-methionine = 3-methylsulfanyl-L-aspartate(89)-[ribosomal protein uS12]-hydrogen + (sulfur carrier)-H + 5'-deoxyadenosine + L-methionine + A + S-adenosyl-L-homocysteine + 2 H(+). In terms of biological role, catalyzes the methylthiolation of an aspartic acid residue of ribosomal protein uS12. The polypeptide is Ribosomal protein uS12 methylthiotransferase RimO (Aeromonas hydrophila subsp. hydrophila (strain ATCC 7966 / DSM 30187 / BCRC 13018 / CCUG 14551 / JCM 1027 / KCTC 2358 / NCIMB 9240 / NCTC 8049)).